Consider the following 181-residue polypeptide: Large ribosomal subunit protein uL6m (181 aa).

Belongs to the universal ribosomal protein uL6 family.

It localises to the mitochondrion. The sequence is that of Large ribosomal subunit protein uL6m (RPL6) from Acanthamoeba castellanii (Amoeba).